The chain runs to 215 residues: Chaperone protein TorD (215 aa).

The protein belongs to the TorD/DmsD family. TorD subfamily.

The protein localises to the cytoplasm. Functionally, involved in the biogenesis of TorA. Acts on TorA before the insertion of the molybdenum cofactor and, as a result, probably favors a conformation of the apoenzyme that is competent for acquiring the cofactor. This is Chaperone protein TorD from Vibrio vulnificus (strain YJ016).